We begin with the raw amino-acid sequence, 419 residues long: UDP-N-acetylglucosamine 1-carboxyvinyltransferase (419 aa).

K22–N23 is a phosphoenolpyruvate binding site. R93 is a binding site for UDP-N-acetyl-alpha-D-glucosamine. Catalysis depends on C117, which acts as the Proton donor. At C117 the chain carries 2-(S-cysteinyl)pyruvic acid O-phosphothioketal. UDP-N-acetyl-alpha-D-glucosamine contacts are provided by D307 and I329.

This sequence belongs to the EPSP synthase family. MurA subfamily.

The protein localises to the cytoplasm. The enzyme catalyses phosphoenolpyruvate + UDP-N-acetyl-alpha-D-glucosamine = UDP-N-acetyl-3-O-(1-carboxyvinyl)-alpha-D-glucosamine + phosphate. Its pathway is cell wall biogenesis; peptidoglycan biosynthesis. Cell wall formation. Adds enolpyruvyl to UDP-N-acetylglucosamine. This Shewanella baltica (strain OS195) protein is UDP-N-acetylglucosamine 1-carboxyvinyltransferase.